We begin with the raw amino-acid sequence, 419 residues long: eIF5-mimic protein 1 (419 aa).

Residues 1–22 (MNKHQKPVLTGQRFKTRKRDEK) are disordered. Residue lysine 117 is modified to N6-acetyllysine. Positions 248–415 (VQQSLGTRKE…QNAEEESESE (168 aa)) constitute a W2 domain. A phosphoserine mark is found at serine 412 and serine 414.

The protein belongs to the BZW family. In terms of assembly, interacts with EIF3E, EIF2S2 and EIF3C.

It localises to the cytoplasm. Its function is as follows. Translation initiation regulator which represses non-AUG initiated translation and repeat-associated non-AUG (RAN) initiated translation by acting as a competitive inhibitor of eukaryotic translation initiation factor 5 (EIF5) function. Increases the accuracy of translation initiation by impeding EIF5-dependent translation from non-AUG codons by competing with it for interaction with EIF2S2 within the 43S pre-initiation complex (PIC) in an EIF3C-binding dependent manner. This chain is eIF5-mimic protein 1 (BZW2), found in Macaca fascicularis (Crab-eating macaque).